Consider the following 521-residue polypeptide: Vang-like protein 2-B (521 aa).

The segment covering 1–18 (MDNDSQYSGYSYKSGQSR) has biased composition (low complexity). Positions 1-73 (MDNDSQYSGY…RDDNWGETTT (73 aa)) are disordered. Over 1–108 (MDNDSQYSGY…AKLDCSRHLG (108 aa)) the chain is Cytoplasmic. Positions 19 to 33 (SSRKHRDRRERHRSK) are enriched in basic residues. Residues 57–67 (ESTRGEDRDDN) are compositionally biased toward basic and acidic residues. A helical transmembrane segment spans residues 109–129 (VVIAGALALLSFLTPIAFMLL). Residues 130–147 (PQILWREDLEQCGTACEG) are Extracellular-facing. The chain crosses the membrane as a helical span at residues 148-168 (LFISVAFKLLILLLGSWALFF). Residues 169–178 (RRPKAFFPRV) lie on the Cytoplasmic side of the membrane. A helical transmembrane segment spans residues 179–199 (FVFRALLMVLVFLLVVSYWLF). The Extracellular portion of the chain corresponds to 200–218 (YGVRILESRDKNYQGIVQY). The helical transmembrane segment at 219–239 (AVSLVDALLFVHYLAVVLLEL) threads the bilayer. Topologically, residues 240-521 (RQLQPQFTIK…VMRLQSETSV (282 aa)) are cytoplasmic. The PDZ-binding signature appears at 518-521 (ETSV).

This sequence belongs to the Vang family. Interacts with dvl/dsh. Interacts with prickle3. During gastrulation, broadly expressed in the dorsal region in both mesodermal and neural tissues. From the neurula stages, expressed throughout the neural tube. In tailbud stages, expression declines in the anterior notochord but remains strong in the posterior notochord and in the neural tube. Also weakly expressed in the prenephritic region of late tailbud embryos.

Its subcellular location is the cell membrane. In terms of biological role, has a role in non-canonical Wnt/planar cell polarity (PCP) signaling; can recruit dvl/dsh and prickle from the cytoplasm to the plasma membrane. Acts in a PCP complex to regulate the polarized assembly of fibronectrin on the surface of the mesoderm during gastrulation. Regulates convergent extension in both dorsal mesoderm and neural tissue without affecting cell fate. Regulates neural fold closure during neurulation. May be required for cell surface localization of fzd3 and fzd6 in the inner ear. In Xenopus laevis (African clawed frog), this protein is Vang-like protein 2-B (vangl2-b).